We begin with the raw amino-acid sequence, 582 residues long: Heterogeneous nuclear ribonucleoprotein C homolog (582 aa).

Positions 1–21 are disordered; it reads MSEALETGDPSPPPPIVSENG. C2H2-type zinc fingers lie at residues 102–125, 130–154, and 213–235; these read YYCC…RGYH, SSCD…RRTH, and YACL…VEMH.

It is found in the nucleus. The protein is Heterogeneous nuclear ribonucleoprotein C homolog of Caenorhabditis elegans.